The sequence spans 215 residues: Ribose-5-phosphate isomerase A (215 aa).

Residues 26-29 (TGST), 79-82 (DGAD), and 92-95 (KGGG) each bind substrate. The Proton acceptor role is filled by glutamate 101. Substrate is bound at residue lysine 119.

The protein belongs to the ribose 5-phosphate isomerase family. In terms of assembly, homodimer.

It carries out the reaction aldehydo-D-ribose 5-phosphate = D-ribulose 5-phosphate. It functions in the pathway carbohydrate degradation; pentose phosphate pathway; D-ribose 5-phosphate from D-ribulose 5-phosphate (non-oxidative stage): step 1/1. Catalyzes the reversible conversion of ribose-5-phosphate to ribulose 5-phosphate. In Xylella fastidiosa (strain M12), this protein is Ribose-5-phosphate isomerase A.